Reading from the N-terminus, the 345-residue chain is Tryptophan--tRNA ligase (345 aa).

Residues 22–24 and 30–31 each bind ATP; these read QPS and GN. Residues 23-31 carry the 'HIGH' region motif; sequence PSGELTIGN. L-tryptophan is bound at residue Asp146. Residues 158-160, Val197, and 206-210 contribute to the ATP site; these read GID and KMSKS. A 'KMSKS' region motif is present at residues 206-210; it reads KMSKS.

It belongs to the class-I aminoacyl-tRNA synthetase family. As to quaternary structure, homodimer.

Its subcellular location is the cytoplasm. The catalysed reaction is tRNA(Trp) + L-tryptophan + ATP = L-tryptophyl-tRNA(Trp) + AMP + diphosphate + H(+). In terms of biological role, catalyzes the attachment of tryptophan to tRNA(Trp). This Photorhabdus laumondii subsp. laumondii (strain DSM 15139 / CIP 105565 / TT01) (Photorhabdus luminescens subsp. laumondii) protein is Tryptophan--tRNA ligase.